The following is a 495-amino-acid chain: UDP-N-acetylmuramoyl-L-alanyl-D-glutamate--2,6-diaminopimelate ligase (495 aa).

Ser29 contributes to the UDP-N-acetyl-alpha-D-muramoyl-L-alanyl-D-glutamate binding site. 111–117 contacts ATP; it reads GTNGKTS. UDP-N-acetyl-alpha-D-muramoyl-L-alanyl-D-glutamate-binding positions include 153 to 154, Ser180, Gln186, and Arg188; that span reads TT. Position 220 is an N6-carboxylysine (Lys220). Residues Arg384, 408–411, Gly459, and Glu463 contribute to the meso-2,6-diaminopimelate site; that span reads DNPR. The short motif at 408 to 411 is the Meso-diaminopimelate recognition motif element; the sequence is DNPR.

It belongs to the MurCDEF family. MurE subfamily. The cofactor is Mg(2+). In terms of processing, carboxylation is probably crucial for Mg(2+) binding and, consequently, for the gamma-phosphate positioning of ATP.

The protein resides in the cytoplasm. It carries out the reaction UDP-N-acetyl-alpha-D-muramoyl-L-alanyl-D-glutamate + meso-2,6-diaminopimelate + ATP = UDP-N-acetyl-alpha-D-muramoyl-L-alanyl-gamma-D-glutamyl-meso-2,6-diaminopimelate + ADP + phosphate + H(+). It participates in cell wall biogenesis; peptidoglycan biosynthesis. Its function is as follows. Catalyzes the addition of meso-diaminopimelic acid to the nucleotide precursor UDP-N-acetylmuramoyl-L-alanyl-D-glutamate (UMAG) in the biosynthesis of bacterial cell-wall peptidoglycan. This is UDP-N-acetylmuramoyl-L-alanyl-D-glutamate--2,6-diaminopimelate ligase from Xanthomonas oryzae pv. oryzae (strain MAFF 311018).